Reading from the N-terminus, the 310-residue chain is UPF0324 membrane protein VP0936 (310 aa).

10 helical membrane passes run 7–29, 44–63, 75–94, 104–126, 133–155, 165–187, 199–218, 228–250, 257–279, and 289–308; these read PFGLALLFCLTPFVSSPIALVIG, IASFTKKLLSYSIIGLGFGI, GIGLIIATIVGTLVIGSLIA, AYLISSGTAICGGSAIAAVAPAI, IGLALATVFVLNSLALFIFPVIG, FGTWAAIAIHDTSSVVGAASAYG, LARALWIIPVALISAVIFSR, LVIPYFIFWYCAAIAFSDFFPQL, IFTIAKQALVVCLFLIGCSISIS, and LLFGVTLWVLISTTSLSWLV.

This sequence belongs to the UPF0324 family.

It is found in the cell membrane. The chain is UPF0324 membrane protein VP0936 from Vibrio parahaemolyticus serotype O3:K6 (strain RIMD 2210633).